We begin with the raw amino-acid sequence, 306 residues long: UDP-3-O-acyl-N-acetylglucosamine deacetylase (306 aa).

Residues H79, H238, and D242 each coordinate Zn(2+). Catalysis depends on H265, which acts as the Proton donor.

The protein belongs to the LpxC family. The cofactor is Zn(2+).

The catalysed reaction is a UDP-3-O-[(3R)-3-hydroxyacyl]-N-acetyl-alpha-D-glucosamine + H2O = a UDP-3-O-[(3R)-3-hydroxyacyl]-alpha-D-glucosamine + acetate. Its pathway is glycolipid biosynthesis; lipid IV(A) biosynthesis; lipid IV(A) from (3R)-3-hydroxytetradecanoyl-[acyl-carrier-protein] and UDP-N-acetyl-alpha-D-glucosamine: step 2/6. Functionally, catalyzes the hydrolysis of UDP-3-O-myristoyl-N-acetylglucosamine to form UDP-3-O-myristoylglucosamine and acetate, the committed step in lipid A biosynthesis. The chain is UDP-3-O-acyl-N-acetylglucosamine deacetylase from Yersinia pseudotuberculosis serotype O:1b (strain IP 31758).